The following is a 755-amino-acid chain: Putative two-component response regulator-like APRR6 (755 aa).

The Response regulatory domain maps to 14–128 (SILLIDHDTA…DIKNMWQHVF (115 aa)).

The protein belongs to the ARR-like family.

The protein resides in the nucleus. This chain is Putative two-component response regulator-like APRR6 (APRR6), found in Arabidopsis thaliana (Mouse-ear cress).